Here is a 266-residue protein sequence, read N- to C-terminus: Undecaprenyl-diphosphatase 3 (266 aa).

8 helical membrane passes run 4–24 (IEAFKALFLGFIEGLTEFLPI), 43–63 (SGRAFEVVIQLGAILAVCWLY), 86–106 (FSVLMAFFPAVIIGVLAVDFI), 109–129 (VLFSPLVVAIALIIGGLIIFW), 145–165 (ITFKQAIAVGFIQCLAMIPGT), 186–206 (TEFSFFLAMPTMLGAATYDLL), 219–239 (NIGLGFITAFISALFVVKALV), and 246–266 (TLRVFAWYRIVLGIIIMFVML).

Belongs to the UppP family.

The protein localises to the cell inner membrane. The catalysed reaction is di-trans,octa-cis-undecaprenyl diphosphate + H2O = di-trans,octa-cis-undecaprenyl phosphate + phosphate + H(+). Catalyzes the dephosphorylation of undecaprenyl diphosphate (UPP). Confers resistance to bacitracin. This chain is Undecaprenyl-diphosphatase 3, found in Acinetobacter baylyi (strain ATCC 33305 / BD413 / ADP1).